A 483-amino-acid polypeptide reads, in one-letter code: RNA-binding protein Nova-1 (483 aa).

The segment at 1–44 (MMAAAPIQQNGTHTGVPIDLDPPDSRKRPLEAPPEAGSTKRTNT) is disordered. Positions 27-43 (KRPLEAPPEAGSTKRTN) match the Bipartite nuclear localization signal motif. KH domains lie at 49-116 (QYFL…HGFI), 147-213 (IKQV…VELI), and 397-464 (KDVV…QYLI). The interval 395–479 (GSKDVVEIAV…YEQGVRAANP (85 aa)) is required for RNA binding.

Interacts with PTBP2; the interaction is direct.

It localises to the nucleus. In terms of biological role, functions to regulate alternative splicing in neurons by binding pre-mRNA in a sequence-specific manner to activate exon inclusion or exclusion. It binds specifically to the sequences 5'-YCAY-3' and regulates splicing in only a subset of regulated exons. Binding to an exonic 5'-YCAY-3' cluster changes the protein complexes assembled on pre-mRNA, blocking U1 snRNP binding and exon inclusion, whereas binding to an intronic 5'-YCAY-3' cluster enhances spliceosome assembly and exon inclusion. Binding to 5'-YCAY-3' clusters results in a local and asymmetric action to regulate spliceosome assembly and alternative splicing in neurons. Binding to an exonic 5'-YCAY-3' cluster changed the protein complexes assembled on pre-mRNA, blocking U1 snRNP (small nuclear ribonucleoprotein) binding and exon inclusion, whereas binding to an intronic 5'-YCAY-3' cluster enhanced spliceosome assembly and exon inclusion. With NOVA1, they perform unique biological functions in different brain areas and cell types. Autoregulates its own expression by acting as a splicing repressor. Acts to activate the inclusion of exon E3A in the glycine receptor alpha-2 chain and of exon E9 in gamma-aminobutyric-acid receptor gamma-2 subunit via a distal downstream UCAU-rich intronic splicing enhancer. Acts to regulate a novel glycine receptor alpha-2 chain splice variant (alpha-2N) in developing spinal cord. This Macaca fascicularis (Crab-eating macaque) protein is RNA-binding protein Nova-1 (NOVA1).